Reading from the N-terminus, the 192-residue chain is Peptidyl-tRNA hydrolase (192 aa).

Y16 provides a ligand contact to tRNA. Residue H21 is the Proton acceptor of the active site. Y66 and N68 together coordinate tRNA.

This sequence belongs to the PTH family. In terms of assembly, monomer.

Its subcellular location is the cytoplasm. The enzyme catalyses an N-acyl-L-alpha-aminoacyl-tRNA + H2O = an N-acyl-L-amino acid + a tRNA + H(+). In terms of biological role, hydrolyzes ribosome-free peptidyl-tRNAs (with 1 or more amino acids incorporated), which drop off the ribosome during protein synthesis, or as a result of ribosome stalling. Functionally, catalyzes the release of premature peptidyl moieties from peptidyl-tRNA molecules trapped in stalled 50S ribosomal subunits, and thus maintains levels of free tRNAs and 50S ribosomes. This chain is Peptidyl-tRNA hydrolase, found in Aquifex aeolicus (strain VF5).